Here is a 355-residue protein sequence, read N- to C-terminus: Nuclear speckle splicing regulatory protein 1 homolog (355 aa).

The interval 1–57 is disordered; sequence MSGTGFRYGLNVMKKKKPNESSNRITFTEDDSSSSEQEHAPIPNSFSSQITAASDAS. Positions 44 to 54 are enriched in polar residues; the sequence is NSFSSQITAAS. Residues 99–162 are a coiled coil; that stretch reads MENLIESAKK…EDRKEEDEKS (64 aa). Disordered regions lie at residues 253–292 and 325–355; these read SANNSMRDDKKRNHKSSYKRSLSPSTRYHQDRPDKRHGTY and KIHASRNTTETQVQSARERYLQRKKKAATNP. Over residues 280–289 the composition is skewed to basic and acidic residues; sequence YHQDRPDKRH. A coiled-coil region spans residues 293–326; the sequence is SLEEIDKQRKEFENRQRLQKEKEFQKSREAALKI. Residues 329-339 show a composition bias toward polar residues; the sequence is SRNTTETQVQS. Residues 346-355 are compositionally biased toward basic residues; sequence QRKKKAATNP.

This sequence belongs to the NSRP1 family.

The polypeptide is Nuclear speckle splicing regulatory protein 1 homolog (Schizosaccharomyces pombe (strain 972 / ATCC 24843) (Fission yeast)).